The primary structure comprises 313 residues: GTP cyclohydrolase MptA (313 aa).

The protein belongs to the GTP cyclohydrolase IV family. As to quaternary structure, homodimer. Fe(2+) is required as a cofactor.

It catalyses the reaction GTP + H2O = 7,8-dihydroneopterin 2',3'-cyclic phosphate + formate + diphosphate + H(+). Its pathway is cofactor biosynthesis; 5,6,7,8-tetrahydromethanopterin biosynthesis. In terms of biological role, converts GTP to 7,8-dihydro-D-neopterin 2',3'-cyclic phosphate, the first intermediate in the biosynthesis of coenzyme methanopterin. The chain is GTP cyclohydrolase MptA from Methanoculleus marisnigri (strain ATCC 35101 / DSM 1498 / JR1).